The sequence spans 244 residues: ATP synthase subunit 4, mitochondrial (244 aa).

The transit peptide at 1–36 directs the protein to the mitochondrion; it reads MSSKLFCLRSFPSVQRTAWQRLVLPSTRKFSLTPTT.

The protein belongs to the eukaryotic ATPase B chain family. As to quaternary structure, F-type ATPases have 2 components, CF(1) - the catalytic core - and CF(0) - the membrane proton channel. In yeast, the dimeric form of ATP synthase consists of 17 polypeptides: alpha, beta, gamma, delta, epsilon, 4 (B), 5 (OSCP), 6 (A), 8, 9 (C), d, E (Tim11), f, g, h, i/j and k.

The protein localises to the mitochondrion. Its subcellular location is the mitochondrion inner membrane. Functionally, mitochondrial membrane ATP synthase (F(1)F(0) ATP synthase or Complex V) produces ATP from ADP in the presence of a proton gradient across the membrane which is generated by electron transport complexes of the respiratory chain. F-type ATPases consist of two structural domains, F(1) - containing the extramembraneous catalytic core, and F(0) - containing the membrane proton channel, linked together by a central stalk and a peripheral stalk. During catalysis, ATP synthesis in the catalytic domain of F(1) is coupled via a rotary mechanism of the central stalk subunits to proton translocation. Part of the complex F(0) domain and the peripheric stalk, which acts as a stator to hold the catalytic alpha(3)beta(3) subcomplex and subunit a/ATP6 static relative to the rotary elements. This chain is ATP synthase subunit 4, mitochondrial (atp4), found in Schizosaccharomyces pombe (strain 972 / ATCC 24843) (Fission yeast).